A 256-amino-acid polypeptide reads, in one-letter code: Thiazole synthase (256 aa).

The active-site Schiff-base intermediate with DXP is K95. Residues G156, 182-183, and 204-205 contribute to the 1-deoxy-D-xylulose 5-phosphate site; these read AG and NT.

This sequence belongs to the ThiG family. Homotetramer. Forms heterodimers with either ThiH or ThiS.

Its subcellular location is the cytoplasm. The enzyme catalyses [ThiS sulfur-carrier protein]-C-terminal-Gly-aminoethanethioate + 2-iminoacetate + 1-deoxy-D-xylulose 5-phosphate = [ThiS sulfur-carrier protein]-C-terminal Gly-Gly + 2-[(2R,5Z)-2-carboxy-4-methylthiazol-5(2H)-ylidene]ethyl phosphate + 2 H2O + H(+). It functions in the pathway cofactor biosynthesis; thiamine diphosphate biosynthesis. Functionally, catalyzes the rearrangement of 1-deoxy-D-xylulose 5-phosphate (DXP) to produce the thiazole phosphate moiety of thiamine. Sulfur is provided by the thiocarboxylate moiety of the carrier protein ThiS. In vitro, sulfur can be provided by H(2)S. This Escherichia coli (strain K12 / MC4100 / BW2952) protein is Thiazole synthase.